The following is a 417-amino-acid chain: UDP-N-acetylglucosamine 1-carboxyvinyltransferase 3 (417 aa).

22-23 (KN) is a binding site for phosphoenolpyruvate. Residue Arg92 coordinates UDP-N-acetyl-alpha-D-glucosamine. The active-site Proton donor is the Cys116. Residue Cys116 is modified to 2-(S-cysteinyl)pyruvic acid O-phosphothioketal. UDP-N-acetyl-alpha-D-glucosamine-binding positions include 121 to 125 (RPIDQ), Asp304, and Ile326.

This sequence belongs to the EPSP synthase family. MurA subfamily.

The protein resides in the cytoplasm. It catalyses the reaction phosphoenolpyruvate + UDP-N-acetyl-alpha-D-glucosamine = UDP-N-acetyl-3-O-(1-carboxyvinyl)-alpha-D-glucosamine + phosphate. It functions in the pathway cell wall biogenesis; peptidoglycan biosynthesis. In terms of biological role, cell wall formation. Adds enolpyruvyl to UDP-N-acetylglucosamine. The polypeptide is UDP-N-acetylglucosamine 1-carboxyvinyltransferase 3 (Caldanaerobacter subterraneus subsp. tengcongensis (strain DSM 15242 / JCM 11007 / NBRC 100824 / MB4) (Thermoanaerobacter tengcongensis)).